The sequence spans 700 residues: ATP-dependent zinc metalloprotease FtsH (700 aa).

Residues 1–10 (MNNNKGGFLR) are Cytoplasmic-facing. Residues 11-31 (SSVFYIFIFLAVVGMVYGLFG) form a helical membrane-spanning segment. The Extracellular segment spans residues 32 to 130 (NDKTTTKTIT…LVTKQAENSG (99 aa)). Residues 131–151 (FWLNLLVSLVPVLLIVAVFYL) form a helical membrane-spanning segment. The Cytoplasmic portion of the chain corresponds to 152-700 (MMNQAGGGKG…ETDDNNTENK (549 aa)). 227-234 (GPPGTGKT) contacts ATP. Residue His-449 participates in Zn(2+) binding. Glu-450 is an active-site residue. Zn(2+)-binding residues include His-453 and Asp-525. Residues 644-700 (KSFEEAKAAADAKDSQAEQRFEKQDEEKSSDDHSESKNEDTDSTDKSETDDNNTENK) form a disordered region.

The protein in the central section; belongs to the AAA ATPase family. This sequence in the C-terminal section; belongs to the peptidase M41 family. In terms of assembly, homohexamer. Requires Zn(2+) as cofactor.

Its subcellular location is the cell membrane. In terms of biological role, acts as a processive, ATP-dependent zinc metallopeptidase for both cytoplasmic and membrane proteins. Plays a role in the quality control of integral membrane proteins. This is ATP-dependent zinc metalloprotease FtsH from Leuconostoc mesenteroides subsp. mesenteroides (strain ATCC 8293 / DSM 20343 / BCRC 11652 / CCM 1803 / JCM 6124 / NCDO 523 / NBRC 100496 / NCIMB 8023 / NCTC 12954 / NRRL B-1118 / 37Y).